The primary structure comprises 325 residues: GMP reductase (325 aa).

The active-site Thioimidate intermediate is C174. 203-226 serves as a coordination point for NADP(+); it reads LIADGGIRTHGDIAKSIRFGASMV.

The protein belongs to the IMPDH/GMPR family. GuaC type 2 subfamily.

It catalyses the reaction IMP + NH4(+) + NADP(+) = GMP + NADPH + 2 H(+). Catalyzes the irreversible NADPH-dependent deamination of GMP to IMP. It functions in the conversion of nucleobase, nucleoside and nucleotide derivatives of G to A nucleotides, and in maintaining the intracellular balance of A and G nucleotides. The chain is GMP reductase from Staphylococcus aureus (strain MRSA252).